The following is a 251-amino-acid chain: Hydroxyacylglutathione hydrolase (251 aa).

Residues H53, H55, D57, H58, H110, D127, and H165 each contribute to the Zn(2+) site.

The protein belongs to the metallo-beta-lactamase superfamily. Glyoxalase II family. As to quaternary structure, monomer. The cofactor is Zn(2+).

The catalysed reaction is an S-(2-hydroxyacyl)glutathione + H2O = a 2-hydroxy carboxylate + glutathione + H(+). It functions in the pathway secondary metabolite metabolism; methylglyoxal degradation; (R)-lactate from methylglyoxal: step 2/2. Functionally, thiolesterase that catalyzes the hydrolysis of S-D-lactoyl-glutathione to form glutathione and D-lactic acid. The sequence is that of Hydroxyacylglutathione hydrolase from Pectobacterium carotovorum subsp. carotovorum (strain PC1).